The primary structure comprises 272 residues: Dermonecrotic toxin LvSicTox-alphaIC1bv (272 aa).

H5 is a catalytic residue. Residues E25 and D27 each contribute to the Mg(2+) site. Residue H41 is the Nucleophile of the active site. Cystine bridges form between C45–C51 and C47–C189. Residue D84 coordinates Mg(2+).

It belongs to the arthropod phospholipase D family. Class II subfamily. Requires Mg(2+) as cofactor. As to expression, expressed by the venom gland.

It is found in the secreted. The catalysed reaction is an N-(acyl)-sphingosylphosphocholine = an N-(acyl)-sphingosyl-1,3-cyclic phosphate + choline. It carries out the reaction an N-(acyl)-sphingosylphosphoethanolamine = an N-(acyl)-sphingosyl-1,3-cyclic phosphate + ethanolamine. The enzyme catalyses a 1-acyl-sn-glycero-3-phosphocholine = a 1-acyl-sn-glycero-2,3-cyclic phosphate + choline. It catalyses the reaction a 1-acyl-sn-glycero-3-phosphoethanolamine = a 1-acyl-sn-glycero-2,3-cyclic phosphate + ethanolamine. Functionally, dermonecrotic toxins cleave the phosphodiester linkage between the phosphate and headgroup of certain phospholipids (sphingolipid and lysolipid substrates), forming an alcohol (often choline) and a cyclic phosphate. This toxin acts on sphingomyelin (SM). It may also act on ceramide phosphoethanolamine (CPE), lysophosphatidylcholine (LPC) and lysophosphatidylethanolamine (LPE), but not on lysophosphatidylserine (LPS), and lysophosphatidylglycerol (LPG). It acts by transphosphatidylation, releasing exclusively cyclic phosphate products as second products. Induces dermonecrosis, hemolysis, increased vascular permeability, edema, inflammatory response, and platelet aggregation. This is Dermonecrotic toxin LvSicTox-alphaIC1bv from Loxosceles variegata (Recluse spider).